The following is a 964-amino-acid chain: Ankyrin repeat and LEM domain-containing protein 2 (964 aa).

Residues 1 to 7 (MLWQRLA) lie on the Extracellular side of the membrane. A helical; Signal-anchor for type III membrane protein transmembrane segment spans residues 8 to 28 (VVEWAALAWELLGASVLFIAV). Over 29-964 (RWLVRRLEKR…VAHVARLAAL (936 aa)) the chain is Cytoplasmic. The region spanning 71 to 115 (MARLKLLNPDDLRKEVMKAGLKCGPITSTTRFIFEKKLAQALLEQ) is the LEM domain. A phosphoserine mark is found at S266 and S275. An ANK repeat occupies 419 to 448 (GFDTPLHFACKFGNVDVVNVLSSHPLIVKN). Phosphoserine occurs at positions 503, 519, 535, 675, and 916. Over residues 666–688 (NQQNTVPSQSQPTTDKFQTSKSG) the composition is skewed to polar residues. The disordered stretch occupies residues 666 to 726 (NQQNTVPSQS…PLNHRTADGR (61 aa)). The interval 920-949 (SPAGSSPSKPGHTSSSSGLHSPGRYSPAHG) is disordered. Residues 923–937 (GSSPSKPGHTSSSSG) are compositionally biased toward low complexity. Phosphoserine is present on S940.

Belongs to the ANKLE2 family. As to quaternary structure, interacts with BAF/BANF1. Interacts with protein phosphatase 2A (PP2A) components PPP2C (PPP2CA or PPP2CB) and PPP2R1A.

It localises to the endoplasmic reticulum membrane. In terms of biological role, involved in mitotic nuclear envelope reassembly by promoting dephosphorylation of BAF/BANF1 during mitotic exit. Coordinates the control of BAF/BANF1 dephosphorylation by inhibiting VRK1 kinase and promoting dephosphorylation of BAF/BANF1 by protein phosphatase 2A (PP2A), thereby facilitating nuclear envelope assembly. May regulate nuclear localization of VRK1 in non-dividing cells. It is unclear whether it acts as a real PP2A regulatory subunit or whether it is involved in recruitment of the PP2A complex. Involved in brain development. The protein is Ankyrin repeat and LEM domain-containing protein 2 (Ankle2) of Mus musculus (Mouse).